A 130-amino-acid polypeptide reads, in one-letter code: MPKEIRWGVAHIFSSPNNTFVHITDITGSETASRVTGGMVVKADHEKPSPYAAMIAAARAAQQAMERGITAIHIKVRAPGGYGPKTPGPGAQAAIRALARSGFIIGRIEDVTPLPHDTIRRPGGRRGRRV.

The protein belongs to the universal ribosomal protein uS11 family. Part of the 30S ribosomal subunit.

In terms of biological role, located on the platform of the 30S subunit. The chain is Small ribosomal subunit protein uS11 from Ignicoccus hospitalis (strain KIN4/I / DSM 18386 / JCM 14125).